We begin with the raw amino-acid sequence, 99 residues long: Large ribosomal subunit protein bL21 (99 aa).

Belongs to the bacterial ribosomal protein bL21 family. Part of the 50S ribosomal subunit. Contacts protein L20.

Functionally, this protein binds to 23S rRNA in the presence of protein L20. This chain is Large ribosomal subunit protein bL21, found in Mesomycoplasma hyopneumoniae (strain 232) (Mycoplasma hyopneumoniae).